The following is a 484-amino-acid chain: Protein LAZ1 homolog 1 (484 aa).

The N-terminal stretch at 1–19 (MEWRGILCSLLFIVSVGES) is a signal peptide. 6 helical membrane-spanning segments follow: residues 42-62 (PILSASVFVVIAILLPMYLIF), 76-96 (FLIGLILMVPVYAVESFLSLV), 190-210 (MILKMICALLAMILEAFGVYG), 219-239 (GYPYLAVVLNFSQTWALYCLV), 264-284 (IVFLTWWQGIIVAFLFSMGLV), and 299-319 (YIICIEMGIAAVVHLYVFPAA). Residues 344–364 (PDPEEVKDSERTTRTRYGRHD) are disordered. Positions 347-364 (EEVKDSERTTRTRYGRHD) are enriched in basic and acidic residues. A coiled-coil region spans residues 406 to 428 (IAKINRTFHQISENVKRFEQQKK). Residues 459–484 (VSDSGLGSTNRHHQSRVSGLWTRMRR) form a disordered region.

Belongs to the TMEM184 family.

It localises to the membrane. The sequence is that of Protein LAZ1 homolog 1 from Arabidopsis thaliana (Mouse-ear cress).